An 880-amino-acid chain; its full sequence is Protein translocase subunit SecA (880 aa).

Residues glutamine 86, 104–108 (GEGKT), and aspartate 511 each bind ATP. Positions 837–871 (AQKIQRSDGDGARRPVEKPKKIGRNDPCPCGSGKK) are disordered. Residues 841–860 (QRSDGDGARRPVEKPKKIGR) show a composition bias toward basic and acidic residues. Residues cysteine 864, cysteine 866, cysteine 875, and cysteine 876 each contribute to the Zn(2+) site.

Belongs to the SecA family. As to quaternary structure, monomer and homodimer. Part of the essential Sec protein translocation apparatus which comprises SecA, SecYEG and auxiliary proteins SecDF. Other proteins may also be involved. The cofactor is Zn(2+).

The protein resides in the cell inner membrane. The protein localises to the cytoplasm. It carries out the reaction ATP + H2O + cellular proteinSide 1 = ADP + phosphate + cellular proteinSide 2.. Its function is as follows. Part of the Sec protein translocase complex. Interacts with the SecYEG preprotein conducting channel. Has a central role in coupling the hydrolysis of ATP to the transfer of proteins into and across the cell membrane, serving as an ATP-driven molecular motor driving the stepwise translocation of polypeptide chains across the membrane. In Thermodesulfovibrio yellowstonii (strain ATCC 51303 / DSM 11347 / YP87), this protein is Protein translocase subunit SecA.